Consider the following 186-residue polypeptide: Peptidyl-tRNA hydrolase (186 aa).

Residue Y13 participates in tRNA binding. H18 acts as the Proton acceptor in catalysis. Residues Y59, N61, and N107 each coordinate tRNA.

The protein belongs to the PTH family. In terms of assembly, monomer.

The protein resides in the cytoplasm. It carries out the reaction an N-acyl-L-alpha-aminoacyl-tRNA + H2O = an N-acyl-L-amino acid + a tRNA + H(+). Functionally, hydrolyzes ribosome-free peptidyl-tRNAs (with 1 or more amino acids incorporated), which drop off the ribosome during protein synthesis, or as a result of ribosome stalling. Catalyzes the release of premature peptidyl moieties from peptidyl-tRNA molecules trapped in stalled 50S ribosomal subunits, and thus maintains levels of free tRNAs and 50S ribosomes. The polypeptide is Peptidyl-tRNA hydrolase (Thermotoga maritima (strain ATCC 43589 / DSM 3109 / JCM 10099 / NBRC 100826 / MSB8)).